We begin with the raw amino-acid sequence, 447 residues long: Argininosuccinate synthase (447 aa).

Residues 17 to 25 and Ala43 contribute to the ATP site; that span reads AFSGGLDTS. An L-citrulline-binding site is contributed by Tyr99. ATP-binding residues include Gly129 and Thr131. Residues Thr131, Asn135, and Asp136 each contribute to the L-aspartate site. Asn135 contacts L-citrulline. Asp136 lines the ATP pocket. L-citrulline contacts are provided by Arg139 and Ser192. An ATP-binding site is contributed by Asp194. The L-citrulline site is built by Thr201, Glu203, and Glu280.

Belongs to the argininosuccinate synthase family. Type 2 subfamily. In terms of assembly, homotetramer.

It is found in the cytoplasm. It carries out the reaction L-citrulline + L-aspartate + ATP = 2-(N(omega)-L-arginino)succinate + AMP + diphosphate + H(+). The protein operates within amino-acid biosynthesis; L-arginine biosynthesis; L-arginine from L-ornithine and carbamoyl phosphate: step 2/3. This is Argininosuccinate synthase (argG) from Salmonella typhi.